Consider the following 1342-residue polypeptide: DNA-directed RNA polymerase subunit beta (1342 aa).

Residues Lys-1022 and Lys-1200 each carry the N6-acetyllysine modification.

The protein belongs to the RNA polymerase beta chain family. In terms of assembly, the RNAP catalytic core consists of 2 alpha, 1 beta, 1 beta' and 1 omega subunit. When a sigma factor is associated with the core the holoenzyme is formed, which can initiate transcription.

It carries out the reaction RNA(n) + a ribonucleoside 5'-triphosphate = RNA(n+1) + diphosphate. DNA-dependent RNA polymerase catalyzes the transcription of DNA into RNA using the four ribonucleoside triphosphates as substrates. This is DNA-directed RNA polymerase subunit beta from Escherichia coli O139:H28 (strain E24377A / ETEC).